We begin with the raw amino-acid sequence, 208 residues long: Thioredoxin domain-containing protein 9 (208 aa).

The Thioredoxin domain occupies 68 to 179; it reads YEEVADEKEF…MENRLARSEV (112 aa).

In terms of tissue distribution, expressed throughout the body with high expression in the nervous system, including the ventral nerve cord and tail neurons, and vulva.

It is found in the nucleus. The protein resides in the cytoplasm. Functionally, required for normal microtubule organization and function. Regulates tubulin acetylation in ALM and PLM neurons. The chain is Thioredoxin domain-containing protein 9 from Caenorhabditis elegans.